A 201-amino-acid polypeptide reads, in one-letter code: MTEPVIKMPKKSVKERQQQVLEVLIGLLNSEEGMQRVTTERLSKAVGVSEGALYRYFPSKTKMFEALIERIEMTLTSYINASKRQENTELAVKAILQTILEFAQKNPGVTRILTGHALMFEDELLKARVAKFFEGLELQFMNLLQMRKLREGRAFADERALAGYLVNFCEGQFLRLVRSNFGFNQHQHFEKQWQLIKPLFY.

The 62-residue stretch at 14–75 folds into the HTH tetR-type domain; the sequence is KERQQQVLEV…ALIERIEMTL (62 aa). A DNA-binding region (H-T-H motif) is located at residues 38–57; it reads TTERLSKAVGVSEGALYRYF.

Belongs to the nucleoid occlusion factor SlmA family. In terms of assembly, homodimer. Interacts with FtsZ.

The protein resides in the cytoplasm. It localises to the nucleoid. In terms of biological role, required for nucleoid occlusion (NO) phenomenon, which prevents Z-ring formation and cell division over the nucleoid. Acts as a DNA-associated cell division inhibitor that binds simultaneously chromosomal DNA and FtsZ, and disrupts the assembly of FtsZ polymers. SlmA-DNA-binding sequences (SBS) are dispersed on non-Ter regions of the chromosome, preventing FtsZ polymerization at these regions. This Glaesserella parasuis serovar 5 (strain SH0165) (Haemophilus parasuis) protein is Nucleoid occlusion factor SlmA.